The chain runs to 242 residues: DNA repair protein RecO (242 aa).

Belongs to the RecO family. In terms of assembly, monomer.

Functionally, involved in DNA repair and RecF pathway recombination. This Shigella sonnei (strain Ss046) protein is DNA repair protein RecO.